A 311-amino-acid chain; its full sequence is Methionyl-tRNA formyltransferase (311 aa).

Residue 112–115 (SLLP) participates in (6S)-5,6,7,8-tetrahydrofolate binding.

Belongs to the Fmt family.

It carries out the reaction L-methionyl-tRNA(fMet) + (6R)-10-formyltetrahydrofolate = N-formyl-L-methionyl-tRNA(fMet) + (6S)-5,6,7,8-tetrahydrofolate + H(+). Functionally, attaches a formyl group to the free amino group of methionyl-tRNA(fMet). The formyl group appears to play a dual role in the initiator identity of N-formylmethionyl-tRNA by promoting its recognition by IF2 and preventing the misappropriation of this tRNA by the elongation apparatus. The sequence is that of Methionyl-tRNA formyltransferase from Bartonella henselae (strain ATCC 49882 / DSM 28221 / CCUG 30454 / Houston 1) (Rochalimaea henselae).